The sequence spans 120 residues: Putative non-specific lipid-transfer protein 14 (120 aa).

A signal peptide spans 1 to 22; it reads MTRSFSPVVSLFLLLLQTICSA. Cystine bridges form between cysteine 30/cysteine 80, cysteine 40/cysteine 57, cysteine 58/cysteine 102, and cysteine 78/cysteine 116.

The protein belongs to the plant LTP family.

Functionally, plant non-specific lipid-transfer proteins transfer phospholipids as well as galactolipids across membranes. May play a role in wax or cutin deposition in the cell walls of expanding epidermal cells and certain secretory tissues. This chain is Putative non-specific lipid-transfer protein 14 (LTP14), found in Arabidopsis thaliana (Mouse-ear cress).